The following is a 330-amino-acid chain: D-lactate dehydrogenase (330 aa).

NAD(+)-binding positions include 156-157 (RI), Asp-176, 206-207 (VP), 233-235 (AAR), and Asp-259. The active site involves Arg-235. The active site involves Glu-264. The active-site Proton donor is the His-296.

Belongs to the D-isomer specific 2-hydroxyacid dehydrogenase family.

The enzyme catalyses (R)-lactate + NAD(+) = pyruvate + NADH + H(+). This chain is D-lactate dehydrogenase (ldhD), found in Staphylococcus aureus.